The chain runs to 419 residues: Tyrosine--tRNA ligase (419 aa).

Position 42 (Y42) interacts with L-tyrosine. The 'HIGH' region signature appears at 47–56 (CTAPSLHVGS). L-tyrosine is bound by residues Y179 and Q183. The 'KMSKS' region signature appears at 239 to 243 (KMGKT). K242 serves as a coordination point for ATP. The S4 RNA-binding domain maps to 353-419 (LGVLAAFVKA…RKRHVLLKLV (67 aa)).

This sequence belongs to the class-I aminoacyl-tRNA synthetase family. TyrS type 1 subfamily. Homodimer.

The protein localises to the cytoplasm. It carries out the reaction tRNA(Tyr) + L-tyrosine + ATP = L-tyrosyl-tRNA(Tyr) + AMP + diphosphate + H(+). Catalyzes the attachment of tyrosine to tRNA(Tyr) in a two-step reaction: tyrosine is first activated by ATP to form Tyr-AMP and then transferred to the acceptor end of tRNA(Tyr). In Methylocella silvestris (strain DSM 15510 / CIP 108128 / LMG 27833 / NCIMB 13906 / BL2), this protein is Tyrosine--tRNA ligase.